We begin with the raw amino-acid sequence, 60 residues long: Small, acid-soluble spore protein H 2 (60 aa).

The disordered stretch occupies residues 38–60; sequence TIHPLDNPSQKQSVPVASLEEHS.

The protein belongs to the SspH family.

It localises to the spore core. This chain is Small, acid-soluble spore protein H 2, found in Geobacillus thermodenitrificans (strain NG80-2).